Reading from the N-terminus, the 719-residue chain is Leucine-rich repeat and fibronectin type-III domain-containing protein 5 (719 aa).

Residues 1-17 (MEKILFYLFLIGIAVKA) form the signal peptide. Residues 18–51 (QICPKRCVCQILSPNLATLCAKKGLLFVPPNIDR) enclose the LRRNT domain. The Extracellular segment spans residues 18–529 (QICPKRCVCQ…MQSQFLGGTM (512 aa)). 7 LRR repeats span residues 52–73 (RTVE…DFAN), 76–97 (SLVD…AFAD), 100–121 (NLRA…MFSG), 124–145 (NLHH…AFDD), 148–169 (ALEE…AVEK), 172–193 (SLHT…TFSH), and 196–217 (KMTR…PLFQ). The N-linked (GlcNAc...) asparagine glycan is linked to asparagine 73. An LRRCT domain is found at 240 to 286 (NPLHCNCELLWLRRLSREDDLETCASPPLLTGRYFWSIPEEEFLCEP). The Ig-like domain occupies 287–373 (PLITRHTHEM…GEATQIVDLH (87 aa)). Cysteine 308 and cysteine 357 are disulfide-bonded. Residues asparagine 330, asparagine 339, asparagine 382, asparagine 406, and asparagine 452 are each glycosylated (N-linked (GlcNAc...) asparagine). The interval 385–414 (NHIHEPDPGSSDISTSTKSGSNTSSSNGDT) is disordered. Residues 393-414 (GSSDISTSTKSGSNTSSSNGDT) show a composition bias toward low complexity. The region spanning 414–503 (TKLSQDKIVV…ITSLTATRVV (90 aa)) is the Fibronectin type-III domain. A helical transmembrane segment spans residues 530–550 (IIIIGGIIVASVLVFIIILMI). Residues 551–719 (RYKVCNNNGQ…VQETQRLELI (169 aa)) lie on the Cytoplasmic side of the membrane. A compositionally biased stretch (low complexity) spans 615-627 (ETCSSQDSSTTTS). Residues 615-694 (ETCSSQDSST…SVTEGPTSKR (80 aa)) are disordered. Polar residues-rich tracts occupy residues 628 to 641 (ALPP…SVSQ) and 649 to 677 (TKPS…TALQ).

This sequence belongs to the LRFN family. In terms of assembly, can form heteromeric complexes with LRFN1, LRFN2, LRFN3 and LFRN4. Able to form homomeric complexes across cell junctions, between adjacent cells. Does not interact with DLG1, DLG2, DLG3 and DLG4.

The protein resides in the membrane. In terms of biological role, cell adhesion molecule that mediates homophilic cell-cell adhesion in a Ca(2+)-independent manner. Promotes neurite outgrowth in hippocampal neurons. The chain is Leucine-rich repeat and fibronectin type-III domain-containing protein 5 (LRFN5) from Homo sapiens (Human).